We begin with the raw amino-acid sequence, 244 residues long: 1-(5-phosphoribosyl)-5-[(5-phosphoribosylamino)methylideneamino] imidazole-4-carboxamide isomerase (244 aa).

The active-site Proton acceptor is D11. The active-site Proton donor is D132.

Belongs to the HisA/HisF family.

The protein resides in the cytoplasm. The catalysed reaction is 1-(5-phospho-beta-D-ribosyl)-5-[(5-phospho-beta-D-ribosylamino)methylideneamino]imidazole-4-carboxamide = 5-[(5-phospho-1-deoxy-D-ribulos-1-ylimino)methylamino]-1-(5-phospho-beta-D-ribosyl)imidazole-4-carboxamide. Its pathway is amino-acid biosynthesis; L-histidine biosynthesis; L-histidine from 5-phospho-alpha-D-ribose 1-diphosphate: step 4/9. The polypeptide is 1-(5-phosphoribosyl)-5-[(5-phosphoribosylamino)methylideneamino] imidazole-4-carboxamide isomerase (Sphingopyxis alaskensis (strain DSM 13593 / LMG 18877 / RB2256) (Sphingomonas alaskensis)).